The primary structure comprises 89 residues: Small ribosomal subunit protein uS19 (89 aa).

It belongs to the universal ribosomal protein uS19 family.

Its function is as follows. Protein S19 forms a complex with S13 that binds strongly to the 16S ribosomal RNA. In Vesicomyosocius okutanii subsp. Calyptogena okutanii (strain HA), this protein is Small ribosomal subunit protein uS19.